Consider the following 267-residue polypeptide: Putative N-acetylmuramoyl-L-alanine amidase RC0497 (267 aa).

The segment at 1 to 25 (MSKSKAIENNGISNTNSPNGKYMAP) is disordered. Over residues 10 to 19 (NGISNTNSPN) the composition is skewed to polar residues. One can recognise an N-acetylmuramoyl-L-alanine amidase domain in the interval 33–141 (TCVVITYSVS…NLDLKHDLVG (109 aa)).

This sequence belongs to the N-acetylmuramoyl-L-alanine amidase 2 family.

Its subcellular location is the secreted. It carries out the reaction Hydrolyzes the link between N-acetylmuramoyl residues and L-amino acid residues in certain cell-wall glycopeptides.. In Rickettsia conorii (strain ATCC VR-613 / Malish 7), this protein is Putative N-acetylmuramoyl-L-alanine amidase RC0497.